Reading from the N-terminus, the 279-residue chain is Protein COP1 SUPPRESSOR 2 (279 aa).

2 disordered regions span residues 1-29 (MPPK…ISEE) and 57-79 (SSTA…EGEK). Residues 68–79 (KPVEKTETEGEK) are compositionally biased toward basic and acidic residues. Positions 86–183 (DTFAQETAVL…EETEAAKKLL (98 aa)) form a coiled coil. The segment covering 217 to 229 (LRREHPELYKDRG) has biased composition (basic and acidic residues). Residues 217–279 (LRREHPELYK…KRERNRVMRR (63 aa)) form a disordered region. The span at 250–260 (ADSGKSRQAAT) shows a compositional bias: polar residues. Residues 270–279 (KRERNRVMRR) are compositionally biased toward basic residues.

The protein belongs to the TLS1 family. As to quaternary structure, interacts with COP1.

The protein localises to the nucleus. The protein resides in the nucleus speckle. Its function is as follows. Inhibits E3 ubiquitin-protein ligase activity of COP1, a central repressor of seedling photomorphogenesis. Represses COP1-mediated turnover of HY5 in the dark. Required for primary root development under normal light growth conditions. The polypeptide is Protein COP1 SUPPRESSOR 2 (Arabidopsis thaliana (Mouse-ear cress)).